We begin with the raw amino-acid sequence, 394 residues long: Elongation factor Tu (394 aa).

The tr-type G domain maps to 10-204; the sequence is KPHLNVGTIG…TLDTYIEDPV (195 aa). The G1 stretch occupies residues 19–26; sequence GHVDHGKT. Residue 19–26 participates in GTP binding; the sequence is GHVDHGKT. Thr26 lines the Mg(2+) pocket. The G2 stretch occupies residues 60–64; the sequence is GITIK. The segment at 81–84 is G3; sequence DCPG. GTP is bound by residues 81–85 and 136–139; these read DCPGH and NKCD. Positions 136 to 139 are G4; sequence NKCD. The segment at 174–176 is G5; that stretch reads SAL.

The protein belongs to the TRAFAC class translation factor GTPase superfamily. Classic translation factor GTPase family. EF-Tu/EF-1A subfamily. In terms of assembly, monomer.

Its subcellular location is the cytoplasm. It carries out the reaction GTP + H2O = GDP + phosphate + H(+). Functionally, GTP hydrolase that promotes the GTP-dependent binding of aminoacyl-tRNA to the A-site of ribosomes during protein biosynthesis. In Onion yellows phytoplasma (strain OY-M), this protein is Elongation factor Tu.